Consider the following 54-residue polypeptide: ATP synthase protein 8 (54 aa).

A helical transmembrane segment spans residues 9-25 (WVFLFFLVWLVLGFLGL).

This sequence belongs to the ATPase protein 8 family. F-type ATPases have 2 components, CF(1) - the catalytic core - and CF(0) - the membrane proton channel.

It is found in the mitochondrion membrane. Its function is as follows. Mitochondrial membrane ATP synthase (F(1)F(0) ATP synthase or Complex V) produces ATP from ADP in the presence of a proton gradient across the membrane which is generated by electron transport complexes of the respiratory chain. F-type ATPases consist of two structural domains, F(1) - containing the extramembraneous catalytic core and F(0) - containing the membrane proton channel, linked together by a central stalk and a peripheral stalk. During catalysis, ATP synthesis in the catalytic domain of F(1) is coupled via a rotary mechanism of the central stalk subunits to proton translocation. Part of the complex F(0) domain. Minor subunit located with subunit a in the membrane. This chain is ATP synthase protein 8 (MTATP8), found in Branchiostoma floridae (Florida lancelet).